A 73-amino-acid chain; its full sequence is Translation initiation factor IF-1 (73 aa).

Residues 1 to 73 enclose the S1-like domain; it reads MPKKDGAIEI…SRGRIVYRYK (73 aa).

This sequence belongs to the IF-1 family. Component of the 30S ribosomal translation pre-initiation complex which assembles on the 30S ribosome in the order IF-2 and IF-3, IF-1 and N-formylmethionyl-tRNA(fMet); mRNA recruitment can occur at any time during PIC assembly.

The protein localises to the cytoplasm. Its function is as follows. One of the essential components for the initiation of protein synthesis. Stabilizes the binding of IF-2 and IF-3 on the 30S subunit to which N-formylmethionyl-tRNA(fMet) subsequently binds. Helps modulate mRNA selection, yielding the 30S pre-initiation complex (PIC). Upon addition of the 50S ribosomal subunit IF-1, IF-2 and IF-3 are released leaving the mature 70S translation initiation complex. The protein is Translation initiation factor IF-1 of Frankia alni (strain DSM 45986 / CECT 9034 / ACN14a).